The sequence spans 931 residues: Transportin (931 aa).

HEAT repeat units follow at residues 10-37, 42-79, 88-121, 127-164, 171-201, 214-241, 253-280, 296-421, 430-459, 471-498, 512-545, 553-586, 594-632, 640-693, 704-735, 743-776, 784-819, 827-860, and 869-900; these read GLKQ…EELD, VPDY…QYFE, YIKR…KSCF, LLPA…LDSD, NQLI…YFII, FLKG…VTLV, KDVI…FWTA, PVLV…LSGI, VTLP…GAIA, SKVI…TLSR, LHPL…EEEA, LQMI…AKVV, ELIN…SSIG, SLFF…GIGT, LPHL…KFCL, PDYL…IRMP, VAIR…IVSP, DKFI…INNN, and VYIC…KTSM. Residues 32 to 99 form the Importin N-terminal domain; that stretch reads IREELDKFHS…KREILPVLSD (68 aa). The segment at 317–401 is disordered; sequence DQGDDSMTPD…DDDDDDDGFE (85 aa). Over residues 358–381 the composition is skewed to low complexity; it reads DNNNNSNNNNSSNNNSSNNNNNNN. The span at 382–401 shows a compositional bias: acidic residues; it reads NEDDEEYNDDDDDDDDDGFE.

Belongs to the importin beta family. Importin beta-2 subfamily. Forms a complex with an importin alpha subunit.

The protein resides in the cytoplasm. Its subcellular location is the nucleus envelope. Functions in nuclear protein import via a substrate-importin alpha-beta transport complex that passes though the nuclear pore complexes (NPC). Mediates docking of the substrate-importin complex to distinct nucleoporins. This chain is Transportin (tnpo), found in Dictyostelium discoideum (Social amoeba).